The sequence spans 71 residues: MSKKCEICGKSRTFGNNRSFSLRSSNRSWAPNIRKVRALVDGKPKRINVCTRCLRSGLVERPQFIKTTEEE.

This sequence belongs to the bacterial ribosomal protein bL28 family.

The chain is Large ribosomal subunit protein bL28 from Finegoldia magna (strain ATCC 29328 / DSM 20472 / WAL 2508) (Peptostreptococcus magnus).